We begin with the raw amino-acid sequence, 704 residues long: Fibulin-1 (704 aa).

The N-terminal stretch at 1-25 is a signal peptide; it reads MDKLRGARPLRLLLLLLALLPALRG. 35 disulfides stabilise this stretch: C33-C59, C34-C66, C47-C67, C76-C107, C89-C108, C110-C134, C111-C141, C124-C142, C181-C191, C187-C200, C202-C215, C221-C234, C228-C243, C249-C261, C267-C280, C274-C289, C295-C307, C313-C326, C320-C335, C342-C355, C361-C374, C368-C383, C385-C398, C404-C416, C412-C425, C427-C440, C446-C455, C451-C464, C466-C480, C486-C499, C495-C508, C510-C524, C530-C543, C537-C552, and C557-C578. Anaphylatoxin-like domains follow at residues 33–74, 75–109, and 110–142; these read CCDK…LEEH, YCSD…KCCY, and CCLL…RACC. Residue N96 is glycosylated (N-linked (GlcNAc...) asparagine). Residues 177-216 form the EGF-like 1 domain; sequence LHDGCRGGGPCSQQCRDTGSSYVCSCFVGYQLQPDGVNCE. The region spanning 217-262 is the EGF-like 2; calcium-binding domain; the sequence is DINECITGTHSCGIGQTCVNTLGSFRCQRDTSCGTGYELTDDSRCK. The region spanning 263-308 is the EGF-like 3; calcium-binding domain; the sequence is DIDECETGTHNCPPDFICQNTPGSFRCRPKLQCMNGFIQDALGNCI. The EGF-like 4; calcium-binding domain maps to 309–356; that stretch reads DINECLSTNMPCPAGQICINTDGSYTCQRISPSCGRGYHLNEDGTRCV. An EGF-like 5; calcium-binding domain is found at 357–399; the sequence is DVDECSSSDQPCGEGHVCINGPGNYRCECKSGYSFDVISRTCI. The interval 357–441 is self-association and FN1-binding; the sequence is DVDECSSSDQ…KLSSDGRSCE (85 aa). Residues 400–441 enclose the EGF-like 6; calcium-binding domain; that stretch reads DINECRRYPGRLCAHKCENTPGSYYCTCTMGFKLSSDGRSCE. Positions 442–481 constitute an EGF-like 7; calcium-binding domain; it reads DLNECESSPCSQECANVYGSYQCYCRRGFQLSDIDGISCE. In terms of domain architecture, EGF-like 8; calcium-binding spans 482 to 525; the sequence is DIDECALPTGGHICSFRCINIPGSFQCTCPSTGYRLAPNARNCQ. Positions 526-579 constitute an EGF-like 9; calcium-binding domain; the sequence is DIDECVAETHNCSFNETCFNIQGGFRCLSLECPENYRKSGDTVRLEKTDTIRCI. N-linked (GlcNAc...) asparagine glycans are attached at residues N536 and N540.

This sequence belongs to the fibulin family. Homomultimerizes and interacts with various extracellular matrix components.

It is found in the secreted. The protein localises to the extracellular space. It localises to the extracellular matrix. In terms of biological role, incorporated into fibronectin-containing matrix fibers. May play a role in cell adhesion and migration along protein fibers within the extracellular matrix (ECM). Could be important for certain developmental processes and contribute to the supramolecular organization of ECM architecture, in particular to those of basement membranes. This is Fibulin-1 (FBLN1) from Gallus gallus (Chicken).